We begin with the raw amino-acid sequence, 98 residues long: NADH-ubiquinone oxidoreductase chain 4L (98 aa).

3 helical membrane-spanning segments follow: residues M1–V21, L26–L46, and I61–I81.

It belongs to the complex I subunit 4L family. As to quaternary structure, core subunit of respiratory chain NADH dehydrogenase (Complex I) which is composed of 45 different subunits.

It is found in the mitochondrion inner membrane. The enzyme catalyses a ubiquinone + NADH + 5 H(+)(in) = a ubiquinol + NAD(+) + 4 H(+)(out). In terms of biological role, core subunit of the mitochondrial membrane respiratory chain NADH dehydrogenase (Complex I) which catalyzes electron transfer from NADH through the respiratory chain, using ubiquinone as an electron acceptor. Part of the enzyme membrane arm which is embedded in the lipid bilayer and involved in proton translocation. The protein is NADH-ubiquinone oxidoreductase chain 4L (MT-ND4L) of Chlorocebus aethiops (Green monkey).